Reading from the N-terminus, the 545-residue chain is Chaperonin GroEL 2 (545 aa).

Residues 30–33 (TLGP), lysine 51, 87–91 (DGTTT), glycine 415, and aspartate 496 contribute to the ATP site.

This sequence belongs to the chaperonin (HSP60) family. In terms of assembly, forms a cylinder of 14 subunits composed of two heptameric rings stacked back-to-back. Interacts with the co-chaperonin GroES.

It localises to the cytoplasm. It carries out the reaction ATP + H2O + a folded polypeptide = ADP + phosphate + an unfolded polypeptide.. Functionally, together with its co-chaperonin GroES, plays an essential role in assisting protein folding. The GroEL-GroES system forms a nano-cage that allows encapsulation of the non-native substrate proteins and provides a physical environment optimized to promote and accelerate protein folding. The sequence is that of Chaperonin GroEL 2 from Nitrobacter winogradskyi (strain ATCC 25391 / DSM 10237 / CIP 104748 / NCIMB 11846 / Nb-255).